Consider the following 283-residue polypeptide: Bifunctional protein FolD (283 aa).

NADP(+)-binding positions include 159-161 (GRS), Ser-184, and Ile-225.

This sequence belongs to the tetrahydrofolate dehydrogenase/cyclohydrolase family. Homodimer.

The catalysed reaction is (6R)-5,10-methylene-5,6,7,8-tetrahydrofolate + NADP(+) = (6R)-5,10-methenyltetrahydrofolate + NADPH. It catalyses the reaction (6R)-5,10-methenyltetrahydrofolate + H2O = (6R)-10-formyltetrahydrofolate + H(+). It participates in one-carbon metabolism; tetrahydrofolate interconversion. Catalyzes the oxidation of 5,10-methylenetetrahydrofolate to 5,10-methenyltetrahydrofolate and then the hydrolysis of 5,10-methenyltetrahydrofolate to 10-formyltetrahydrofolate. The chain is Bifunctional protein FolD from Methanoculleus marisnigri (strain ATCC 35101 / DSM 1498 / JR1).